A 356-amino-acid polypeptide reads, in one-letter code: Phospho-N-acetylmuramoyl-pentapeptide-transferase (356 aa).

Transmembrane regions (helical) follow at residues 25–45, 70–90, 93–113, 138–158, 164–184, 195–215, 235–255, 258–278, 284–304, and 333–353; these read TIAAMLTSGLIVFLFGPSIIA, GTPTMGGLMILTGIVVSAFLW, LSNIYFWVSLLVMLSFGAIGF, FFVAAIAAFIILQIGSSGFAL, YLIHLGWFFIPFSAFVIVATG, GLAIVPVMVAALSFALIAYLC, LAVLLGAVVGAGLGFLWFNAP, AIFMGDTGSLALGGLLGTVAV, IVLVLIGGLFVVEAFSVVIQV, and QVVIRFWIISIVLALIGLSTL.

It belongs to the glycosyltransferase 4 family. MraY subfamily. The cofactor is Mg(2+).

The protein resides in the cell inner membrane. The enzyme catalyses UDP-N-acetyl-alpha-D-muramoyl-L-alanyl-gamma-D-glutamyl-meso-2,6-diaminopimeloyl-D-alanyl-D-alanine + di-trans,octa-cis-undecaprenyl phosphate = di-trans,octa-cis-undecaprenyl diphospho-N-acetyl-alpha-D-muramoyl-L-alanyl-D-glutamyl-meso-2,6-diaminopimeloyl-D-alanyl-D-alanine + UMP. The protein operates within cell wall biogenesis; peptidoglycan biosynthesis. In terms of biological role, catalyzes the initial step of the lipid cycle reactions in the biosynthesis of the cell wall peptidoglycan: transfers peptidoglycan precursor phospho-MurNAc-pentapeptide from UDP-MurNAc-pentapeptide onto the lipid carrier undecaprenyl phosphate, yielding undecaprenyl-pyrophosphoryl-MurNAc-pentapeptide, known as lipid I. In Bartonella tribocorum (strain CIP 105476 / IBS 506), this protein is Phospho-N-acetylmuramoyl-pentapeptide-transferase.